Reading from the N-terminus, the 250-residue chain is Ribosomal RNA small subunit methyltransferase J (250 aa).

Residues 101–102 (RD), 117–118 (ER), 153–154 (SS), and D171 each bind S-adenosyl-L-methionine.

This sequence belongs to the methyltransferase superfamily. RsmJ family.

It localises to the cytoplasm. The catalysed reaction is guanosine(1516) in 16S rRNA + S-adenosyl-L-methionine = N(2)-methylguanosine(1516) in 16S rRNA + S-adenosyl-L-homocysteine + H(+). In terms of biological role, specifically methylates the guanosine in position 1516 of 16S rRNA. The polypeptide is Ribosomal RNA small subunit methyltransferase J (Escherichia coli (strain SMS-3-5 / SECEC)).